Here is a 530-residue protein sequence, read N- to C-terminus: Vesicular acetylcholine transporter (530 aa).

Over 1-33 the chain is Cytoplasmic; that stretch reads MEPTAPTGQARAAATKLSEAVGAALQEPQRQRR. A helical membrane pass occupies residues 34-54; sequence LVLVIVCVALLLDNMLYMVIV. Residues 55 to 125 lie on the Lumenal, vesicle side of the membrane; the sequence is PIVPDYIAHM…PTESEDVKIG (71 aa). N-linked (GlcNAc...) asparagine glycans are attached at residues Asn89 and Asn96. Residues 126–146 traverse the membrane as a helical segment; the sequence is VLFASKAILQLLVNPLSGPFI. Residues 147–152 are Cytoplasmic-facing; that stretch reads DRMSYD. The helical transmembrane segment at 153–173 threads the bilayer; it reads VPLLIGLGVMFASTVMFAFAE. Topologically, residues 174-182 are lumenal, vesicle; that stretch reads DYATFFAAR. The helical transmembrane segment at 183 to 203 threads the bilayer; sequence SLQGLGSAFADTSGIAMIADK. Over 204 to 213 the chain is Cytoplasmic; the sequence is YPEEPERSRA. Residues 214–234 traverse the membrane as a helical segment; it reads LGVALAFISFGSLVAPPFGGI. At 235 to 242 the chain is on the lumenal, vesicle side; that stretch reads LYEFAGKR. A helical membrane pass occupies residues 243–263; the sequence is VPFLVLAAVSLFDALLLLAVA. Topologically, residues 264-288 are cytoplasmic; it reads KPFSAAARARANLPVGTPIHRLMLD. The chain crosses the membrane as a helical span at residues 289–309; that stretch reads PYIAVVAGALTTCNIPLAFLE. Topologically, residues 310–325 are lumenal, vesicle; the sequence is PTIATWMKHTMAASEW. Residues 326–346 form a helical membrane-spanning segment; the sequence is EMGMVWLPAFVPHVLGVYLTV. Over 347–356 the chain is Cytoplasmic; the sequence is RLAARYPHLQ. Residues 357–377 traverse the membrane as a helical segment; that stretch reads WLYGALGLAVIGVSSCVVPAC. Residues 378–388 are Lumenal, vesicle-facing; that stretch reads RSFAPLVVSLC. Residues 389 to 409 traverse the membrane as a helical segment; that stretch reads GLCFGIALVDTALLPTLAFLV. The Cytoplasmic portion of the chain corresponds to 410–422; the sequence is DVRHVSVYGSVYA. A helical membrane pass occupies residues 423–443; sequence IADISYSVAYALGPIVAGHIV. The Lumenal, vesicle segment spans residues 444 to 447; sequence HSLG. The chain crosses the membrane as a helical span at residues 448 to 468; it reads FEQLSLGMGLANLLYAPVLLL. The Cytoplasmic segment spans residues 469–530; the sequence is LRNVGLLTRS…EDDYNYYSRS (62 aa). The mediates interaction with SEC14L1 stretch occupies residues 471-530; sequence NVGLLTRSRSERDVLLDEPPQGLYDAVRLREVQGKDGGEPCSPPGPFDGCEDDYNYYSRS. A disordered region spans residues 504 to 530; it reads GKDGGEPCSPPGPFDGCEDDYNYYSRS.

The protein belongs to the major facilitator superfamily. Vesicular transporter family. In terms of assembly, interacts with SEC14L1. Expressed in the spinal cord, brain (excluding the cerebellum), brain stem and cholinergic tissues. Not expressed in peripheral tissues such as liver and kidney.

It localises to the cytoplasmic vesicle. Its subcellular location is the secretory vesicle. The protein resides in the synaptic vesicle membrane. It carries out the reaction acetylcholine(out) + 2 H(+)(in) = acetylcholine(in) + 2 H(+)(out). The enzyme catalyses choline(in) + 2 H(+)(out) = choline(out) + 2 H(+)(in). It catalyses the reaction serotonin(in) + 2 H(+)(out) = serotonin(out) + 2 H(+)(in). Functionally, electrogenic antiporter that exchanges one cholinergic neurotransmitter, acetylcholine or choline, with two intravesicular protons across the membrane of synaptic vesicles. Uses the electrochemical proton gradient established by the V-type proton-pump ATPase to store neurotransmitters inside the vesicles prior to their release via exocytosis. Determines cholinergic vesicular quantal size at presynaptic nerve terminals in developing neuro-muscular junctions with an impact on motor neuron differentiation and innervation pattern. Part of forebrain cholinergic system, regulates hippocampal synapse transmissions that underlie spatial memory formation. Can transport serotonin. The polypeptide is Vesicular acetylcholine transporter (Slc18a3) (Mus musculus (Mouse)).